A 1316-amino-acid chain; its full sequence is MAIVKRGGRTKTKQQQVPAKSSGGGSSGGIKKAEFDITKKKEVGVSDLTLLSKITDEAINENLHKRFMNDTIYTYIGHVLISVNPFRDLGIYTLENLNKYKGRNRLEVPPHVFAIAESMYYNLKSYGENQCVIISGESGAGKTEAAKQIMQYIANVSVNQDNVEISKIKDMVLATNPLLESFGCAKTLRNNNSSRHGKYLEIKFSEGNYQPIAAHITNYLLEKQRVVSQITNERNFHIFYQFTKHCPPQYQQMFGIQGPETYVYTSAAKCINVDGVDDAKDFQDTLNAMKIIGLTQQEQDNIFRMLASILWIGNISFVEDENGNAAIRDDSVTNFAAYLLDVNPEILKKAIIERTIETSHGMRRGSTYHSPLNIVQATAVRDALAKGIYNNLFEWIVERVNISLAGSQQQSSKSIGILDIYGFEIFERNSFEQICINYVNEKLQQIFIQLTLKAEQDEYVQEQIKWTPIDYFNNKVVCDLIEATRPQPGLFAALNDSIKTAHADSEAADQVFAQRLSMVGASNRHFEDRRGKFIIKHYAGDVTYDVAGMTDKNKDAMLRDLLELVSTSQNSFINQVLFPPDLLAQLTDSRKRPETASDKIKKSANILVDTLSQCTPSYIRTIKPNQTKKPRDYDNQQVLHQIKYLGLKENVRIRRAGFAYRSTFERFVQRFYLLSPATGYAGDYIWRGDDISAVKEILKSCHIPPSEYQLGTTKVFIKTPETLFALEDMRDKYWHNMAARIQRAWRRYVKRKEDAAKTIQNAWRIKKHGNQFEQFRDYGNGLLQGRKERRRMSMLGSRAFMGDYLGCNYKSGYGRFIINQVGINESVIFSSKGEILLSKFGRSSKRLPRIFIVTKTSIYIIAEVLVEKRLQLQKEFTIPISGINYLGLSTFQDNWVAISLHSPTPTTPDVFINLDFKTELVAQLKKLNPGITIKIGPTIEYQKKPGKFHTVKFIIGAGPEIPNNGDHYKSGTVSVKQGLPASSKNPKRPRGVSSKVDYSKYYNRGAARKTAAAAQATPRYNQPTPVANSGYSAQPAYPIPQQPQQYQPQQSQQQTPYPTQSSIPSVNQNQSRQPQRKVPPPAPSLQVSAAQAALGKSPTQQRQTPAHNPVASPNRPASTTIATTTSHTSRPVKKTAPAPPVKKTAPPPPPPTLVKPKFPTYKAMFDYDGSVAGSIPLVKDTVYYVTQVNGKWGLVKTMDETKEGWSPIDYLKECSPNETQKSAPPPPPPPPAATASAGANGASNPISTTTSTNTTTSSHTTNATSNGSLGNGLADALKAKKQEETTLAGSLADALKKRQGATRDSDDEEEEDDDDW.

Residues Met1 to Thr12 show a composition bias toward basic residues. Residues Met1 to Gly29 are disordered. One can recognise a Myosin motor domain in the interval Val43 to Asp731. Residue Gly136–Thr143 coordinates ATP. Ser366 is modified (phosphoserine). Residues Ser414 to Ser497 form an actin-binding region. IQ domains lie at His735–Ala755 and Ala756–Gly781. A TH1 domain is found at Arg789–Ala981. Disordered stretches follow at residues Asn964 to Val1154 and Asp1209 to Trp1316. Composition is skewed to polar residues over residues Gly971–Lys984 and Pro1018–Gly1030. Low complexity predominate over residues Gln1042 to Ser1065. Positions Ser1097 to Ala1106 are enriched in polar residues. Residues Ala1117–Ser1129 are compositionally biased toward low complexity. The span at Pro1137 to Leu1153 shows a compositional bias: pro residues. The SH3 domain occupies Pro1156–Pro1216. The segment covering Ala1223–Ala1232 has biased composition (pro residues). A compositionally biased stretch (low complexity) spans Ala1233–Ser1268. Residues Ser1305–Trp1316 are compositionally biased toward acidic residues.

It belongs to the TRAFAC class myosin-kinesin ATPase superfamily. Myosin family. In terms of processing, phosphorylation of the TEDS site (Ser-366) is required for the polarization of the actin cytoskeleton. Phosphorylation probably activates the myosin-I ATPase activity.

Its subcellular location is the cytoplasm. It localises to the cytoskeleton. The protein resides in the actin patch. Its function is as follows. Type-I myosin implicated in the organization of the actin cytoskeleton. Required for proper actin cytoskeleton polarization and for the internalization step in endocytosis. At the cell cortex, assembles in patch-like structures together with proteins from the actin-polymerizing machinery and promotes actin assembly. Functions as actin nucleation-promoting factor (NPF) for the Arp2/3 complex. Plays a role in chitin deposition in the cell wall, in determination of the budding pattern, and is required for hyphae formation. In Candida albicans (strain SC5314 / ATCC MYA-2876) (Yeast), this protein is Myosin-5 (MYO5).